The following is a 230-amino-acid chain: Orotidine 5'-phosphate decarboxylase (230 aa).

Substrate contacts are provided by residues Asp-10, Lys-31, 58–67, Thr-117, Arg-179, Gln-188, Gly-208, and Arg-209; that span reads DLKLHDIPNT. Residue Lys-60 is the Proton donor of the active site.

The protein belongs to the OMP decarboxylase family. Type 1 subfamily. As to quaternary structure, homodimer.

It carries out the reaction orotidine 5'-phosphate + H(+) = UMP + CO2. It functions in the pathway pyrimidine metabolism; UMP biosynthesis via de novo pathway; UMP from orotate: step 2/2. In terms of biological role, catalyzes the decarboxylation of orotidine 5'-monophosphate (OMP) to uridine 5'-monophosphate (UMP). The polypeptide is Orotidine 5'-phosphate decarboxylase (Staphylococcus haemolyticus (strain JCSC1435)).